An 81-amino-acid chain; its full sequence is ATP synthase subunit c (81 aa).

A run of 2 helical transmembrane segments spans residues 7 to 27 (AASV…PGIG) and 57 to 77 (LAFM…LLFA).

Belongs to the ATPase C chain family. As to quaternary structure, F-type ATPases have 2 components, F(1) - the catalytic core - and F(0) - the membrane proton channel. F(1) has five subunits: alpha(3), beta(3), gamma(1), delta(1), epsilon(1). F(0) has four main subunits: a(1), b(1), b'(1) and c(10-14). The alpha and beta chains form an alternating ring which encloses part of the gamma chain. F(1) is attached to F(0) by a central stalk formed by the gamma and epsilon chains, while a peripheral stalk is formed by the delta, b and b' chains.

It is found in the cellular thylakoid membrane. Its function is as follows. F(1)F(0) ATP synthase produces ATP from ADP in the presence of a proton or sodium gradient. F-type ATPases consist of two structural domains, F(1) containing the extramembraneous catalytic core and F(0) containing the membrane proton channel, linked together by a central stalk and a peripheral stalk. During catalysis, ATP synthesis in the catalytic domain of F(1) is coupled via a rotary mechanism of the central stalk subunits to proton translocation. Functionally, key component of the F(0) channel; it plays a direct role in translocation across the membrane. A homomeric c-ring of between 10-14 subunits forms the central stalk rotor element with the F(1) delta and epsilon subunits. In Synechococcus sp. (strain CC9902), this protein is ATP synthase subunit c.